The sequence spans 911 residues: Isoleucine--tRNA ligase (911 aa).

The 'HIGH' region signature appears at 57–67 (PYANGDIHMGH). Glutamate 551 contributes to the L-isoleucyl-5'-AMP binding site. The 'KMSKS' region signature appears at 592–596 (KMSKS). ATP is bound at residue lysine 595. The Zn(2+) site is built by cysteine 881, cysteine 884, cysteine 901, and cysteine 904.

It belongs to the class-I aminoacyl-tRNA synthetase family. IleS type 1 subfamily. In terms of assembly, monomer. The cofactor is Zn(2+).

The protein resides in the cytoplasm. The enzyme catalyses tRNA(Ile) + L-isoleucine + ATP = L-isoleucyl-tRNA(Ile) + AMP + diphosphate. In terms of biological role, catalyzes the attachment of isoleucine to tRNA(Ile). As IleRS can inadvertently accommodate and process structurally similar amino acids such as valine, to avoid such errors it has two additional distinct tRNA(Ile)-dependent editing activities. One activity is designated as 'pretransfer' editing and involves the hydrolysis of activated Val-AMP. The other activity is designated 'posttransfer' editing and involves deacylation of mischarged Val-tRNA(Ile). This Exiguobacterium sibiricum (strain DSM 17290 / CCUG 55495 / CIP 109462 / JCM 13490 / 255-15) protein is Isoleucine--tRNA ligase.